The primary structure comprises 447 residues: Bifunctional protein GlmU (447 aa).

A pyrophosphorylase region spans residues 1–225; sequence MLTVAILAAG…NGELQGINNR (225 aa). UDP-N-acetyl-alpha-D-glucosamine-binding positions include 7 to 10, Lys-21, Gln-73, and 78 to 79; these read LAAG and GT. A Mg(2+)-binding site is contributed by Asp-103. Residues Gly-140, Glu-154, Asn-169, and Asn-223 each coordinate UDP-N-acetyl-alpha-D-glucosamine. Mg(2+) is bound at residue Asn-223. The segment at 226–246 is linker; the sequence is VQLSKCEETIQNLIKEKHMLG. Residues 247-447 are N-acetyltransferase; the sequence is GVTFINPASC…QVNIENWKKN (201 aa). 2 residues coordinate UDP-N-acetyl-alpha-D-glucosamine: Arg-328 and Lys-346. Residue His-358 is the Proton acceptor of the active site. Tyr-361 and Asn-372 together coordinate UDP-N-acetyl-alpha-D-glucosamine. Acetyl-CoA contacts are provided by Ala-375, Ala-418, and Arg-435.

In the N-terminal section; belongs to the N-acetylglucosamine-1-phosphate uridyltransferase family. It in the C-terminal section; belongs to the transferase hexapeptide repeat family. As to quaternary structure, homotrimer. Requires Mg(2+) as cofactor.

The protein resides in the cytoplasm. The enzyme catalyses alpha-D-glucosamine 1-phosphate + acetyl-CoA = N-acetyl-alpha-D-glucosamine 1-phosphate + CoA + H(+). The catalysed reaction is N-acetyl-alpha-D-glucosamine 1-phosphate + UTP + H(+) = UDP-N-acetyl-alpha-D-glucosamine + diphosphate. The protein operates within nucleotide-sugar biosynthesis; UDP-N-acetyl-alpha-D-glucosamine biosynthesis; N-acetyl-alpha-D-glucosamine 1-phosphate from alpha-D-glucosamine 6-phosphate (route II): step 2/2. Its pathway is nucleotide-sugar biosynthesis; UDP-N-acetyl-alpha-D-glucosamine biosynthesis; UDP-N-acetyl-alpha-D-glucosamine from N-acetyl-alpha-D-glucosamine 1-phosphate: step 1/1. It functions in the pathway bacterial outer membrane biogenesis; LPS lipid A biosynthesis. In terms of biological role, catalyzes the last two sequential reactions in the de novo biosynthetic pathway for UDP-N-acetylglucosamine (UDP-GlcNAc). The C-terminal domain catalyzes the transfer of acetyl group from acetyl coenzyme A to glucosamine-1-phosphate (GlcN-1-P) to produce N-acetylglucosamine-1-phosphate (GlcNAc-1-P), which is converted into UDP-GlcNAc by the transfer of uridine 5-monophosphate (from uridine 5-triphosphate), a reaction catalyzed by the N-terminal domain. The polypeptide is Bifunctional protein GlmU (Prochlorococcus marinus (strain MIT 9515)).